The primary structure comprises 447 residues: Tubulin beta chain (447 aa).

Residues Gln11, Glu69, Ser138, Gly142, Thr143, Gly144, Asn204, and Asn226 each contribute to the GTP site. Residue Glu69 coordinates Mg(2+). The segment at 419 to 447 (VSEYQQYQDATADEEGEYEDEDQEAEDDM) is disordered. Positions 429–447 (TADEEGEYEDEDQEAEDDM) are enriched in acidic residues.

The protein belongs to the tubulin family. As to quaternary structure, dimer of alpha and beta chains. A typical microtubule is a hollow water-filled tube with an outer diameter of 25 nm and an inner diameter of 15 nM. Alpha-beta heterodimers associate head-to-tail to form protofilaments running lengthwise along the microtubule wall with the beta-tubulin subunit facing the microtubule plus end conferring a structural polarity. Microtubules usually have 13 protofilaments but different protofilament numbers can be found in some organisms and specialized cells. Requires Mg(2+) as cofactor.

The protein localises to the cytoplasm. Its subcellular location is the cytoskeleton. Its function is as follows. Tubulin is the major constituent of microtubules, a cylinder consisting of laterally associated linear protofilaments composed of alpha- and beta-tubulin heterodimers. Microtubules grow by the addition of GTP-tubulin dimers to the microtubule end, where a stabilizing cap forms. Below the cap, tubulin dimers are in GDP-bound state, owing to GTPase activity of alpha-tubulin. The protein is Tubulin beta chain (TUBB) of Hordeum vulgare (Barley).